A 155-amino-acid polypeptide reads, in one-letter code: Cytochrome c oxidase subunit 4, mitochondrial (155 aa).

Residues 1–25 (MLSLRQSIRFFKPATRTLCSSRYLL) constitute a mitochondrion transit peptide. Phosphothreonine is present on Thr55. 4 residues coordinate Zn(2+): Cys111, His119, Cys134, and Cys137.

This sequence belongs to the cytochrome c oxidase subunit 5B family. Component of the cytochrome c oxidase (complex IV, CIV), a multisubunit enzyme composed of 12 subunits. The complex is composed of a catalytic core of 3 subunits COX1, COX2 and COX3, encoded in the mitochondrial DNA, and 9 supernumerary subunits COX4, COX5A (or COX5B), COX6, COX7, COX8, COX9, COX12, COX13 and COX26, which are encoded in the nuclear genome. The complex exists as a monomer or a dimer and forms supercomplexes (SCs) in the inner mitochondrial membrane with a dimer of ubiquinol-cytochrome c oxidoreductase (cytochrome b-c1 complex, complex III, CIII), resulting in 2 different assemblies (supercomplexes III(2)IV and III(2)IV(2)).

The protein resides in the mitochondrion inner membrane. It participates in energy metabolism; oxidative phosphorylation. Its function is as follows. Component of the cytochrome c oxidase, the last enzyme in the mitochondrial electron transport chain which drives oxidative phosphorylation. The respiratory chain contains 3 multisubunit complexes succinate dehydrogenase (complex II, CII), ubiquinol-cytochrome c oxidoreductase (cytochrome b-c1 complex, complex III, CIII) and cytochrome c oxidase (complex IV, CIV), that cooperate to transfer electrons derived from NADH and succinate to molecular oxygen, creating an electrochemical gradient over the inner membrane that drives transmembrane transport and the ATP synthase. Cytochrome c oxidase is the component of the respiratory chain that catalyzes the reduction of oxygen to water. Electrons originating from reduced cytochrome c in the intermembrane space (IMS) are transferred via the dinuclear copper A center (CU(A)) of COX2 and heme A of COX1 to the active site in COX1, a binuclear center (BNC) formed by heme A3 and copper B (CU(B)). The BNC reduces molecular oxygen to 2 water molecules using 4 electrons from cytochrome c in the IMS and 4 protons from the mitochondrial matrix. In Saccharomyces cerevisiae (strain ATCC 204508 / S288c) (Baker's yeast), this protein is Cytochrome c oxidase subunit 4, mitochondrial (COX4).